A 629-amino-acid polypeptide reads, in one-letter code: Ribosomal protein S6 kinase 2 beta (629 aa).

The 260-residue stretch at F62–F321 folds into the Protein kinase 1 domain. Residues L68 to V76 and K94 each bind ATP. Residue D187 is the Proton acceptor of the active site. Position 221 is a phosphoserine (S221). In terms of domain architecture, AGC-kinase C-terminal spans S322–A391. Phosphothreonine is present on T359. S363 bears the Phosphoserine mark. The residue at position 380 (S380) is a Phosphoserine; by autocatalysis. A Protein kinase 2 domain is found at Y416–S629. ATP-binding positions include I422–C430 and K445. Residue D533 is the Proton acceptor of the active site. T571 is subject to Phosphothreonine.

The protein belongs to the protein kinase superfamily. AGC Ser/Thr protein kinase family. S6 kinase subfamily. The cofactor is Mg(2+). In terms of processing, autophosphorylated on Ser-380, as part of the activation process.

It carries out the reaction L-seryl-[protein] + ATP = O-phospho-L-seryl-[protein] + ADP + H(+). The enzyme catalyses L-threonyl-[protein] + ATP = O-phospho-L-threonyl-[protein] + ADP + H(+). Activated by multiple phosphorylations on threonine and serine residues. Functionally, serine/threonine kinase that may play a role in mediating the growth-factor and stress induced activation of transcription. In Xenopus laevis (African clawed frog), this protein is Ribosomal protein S6 kinase 2 beta.